A 263-amino-acid polypeptide reads, in one-letter code: Imidazole glycerol phosphate synthase subunit HisF (263 aa).

Active-site residues include Asp11 and Asp130.

It belongs to the HisA/HisF family. Heterodimer of HisH and HisF.

The protein localises to the cytoplasm. It catalyses the reaction 5-[(5-phospho-1-deoxy-D-ribulos-1-ylimino)methylamino]-1-(5-phospho-beta-D-ribosyl)imidazole-4-carboxamide + L-glutamine = D-erythro-1-(imidazol-4-yl)glycerol 3-phosphate + 5-amino-1-(5-phospho-beta-D-ribosyl)imidazole-4-carboxamide + L-glutamate + H(+). It participates in amino-acid biosynthesis; L-histidine biosynthesis; L-histidine from 5-phospho-alpha-D-ribose 1-diphosphate: step 5/9. IGPS catalyzes the conversion of PRFAR and glutamine to IGP, AICAR and glutamate. The HisF subunit catalyzes the cyclization activity that produces IGP and AICAR from PRFAR using the ammonia provided by the HisH subunit. The polypeptide is Imidazole glycerol phosphate synthase subunit HisF (Herpetosiphon aurantiacus (strain ATCC 23779 / DSM 785 / 114-95)).